We begin with the raw amino-acid sequence, 378 residues long: Trans-enoyl reductase poxP (378 aa).

62–65 lines the NADP(+) pocket; that stretch reads CDWK. Residue 151 to 158 coordinates substrate; the sequence is SVFATLWI. NADP(+) contacts are provided by residues 187-190, 210-213, tyrosine 228, and 275-276; these read STST, SPHN, and LE. Residue 295 to 299 participates in substrate binding; sequence GLAAS. 364–365 is an NADP(+) binding site; the sequence is TS.

The protein belongs to the zinc-containing alcohol dehydrogenase family. Monomer.

Its pathway is secondary metabolite biosynthesis. Functionally, trans-enoyl reductase; part of the gene cluster that mediates the biosynthesis of oxaleimides, cytotoxic compounds containing an unusual disubstituted succinimide moiety. The first step of the pathway is provided by the HR-PKS poxF that serves in a new mode of collaborative biosynthesis with the PKS-NRPS poxE, by providing the olefin containing amino acid substrate via the synthesis of an ACP-bound dec-4-enoate. The cytochrome P450 monooxygenase poxM-catalyzed oxidation at the alpha-position creates the enzyme-bound 2-hydroxydec-4-enoyl-ACP thioester, which may be prone to spontaneous hydrolysis to yield 2-hydroxydec-4-enoic acid due to increased electrophilicity of the carbonyl. 2-hydroxydec-4-enoic acid can then be further oxidized by poxM to yield the alpha-ketoacid 2-oxodec-4-enoicacid, which is reductively aminated by the aminotransferase poxL to yield (S,E)-2-aminodec-4-enoic acid. The Hybrid PKS-NRPS synthetase poxE then performs condensation between the octaketide product of its PKS modules and the amino group of (S,E)-2-aminodec-4-enoic acid which is activated and incorporated by the adenylation domain. The resulting aminoacyl product can be cyclized by the Diels-Alderase PoxQ and reductively released by the reductive (R) domain of poxE to yield an aldehyde intermediate. The released aldehyde is then substrate for a Knoevenagel condensation by the hydrolyase poxO followed by an oxidation at the 5-position of the pyrrolidone ring. The presence of the olefin from the amino acid building block allows for migration of the substituted allyl group to occur. This allylic transposition reaction takes place in a conjugate addition, semipinacol-like fashion to yield a succinimide intermediate. Iterative two-electron oxidations of the C7 methyl of the succinimide intermediate to the carboxylic acid can be catalyzed by one of two remaining cytochrome P450 monooxygenasess poxC or poxD to yield oxaleimide A. Subsequent oxidation yields the maleimide scaffold oxaleimide I. Both oxaleimide A and oxaleimide I can undergo oxidative modifications in the decalin ring to yield the series of products oxaleimides B to H. This chain is Trans-enoyl reductase poxP, found in Penicillium oxalicum.